We begin with the raw amino-acid sequence, 293 residues long: Acetylglutamate kinase (293 aa).

Substrate contacts are provided by residues 70-71 (GG), Arg-92, and Asn-186.

This sequence belongs to the acetylglutamate kinase family. ArgB subfamily.

Its subcellular location is the cytoplasm. The catalysed reaction is N-acetyl-L-glutamate + ATP = N-acetyl-L-glutamyl 5-phosphate + ADP. It functions in the pathway amino-acid biosynthesis; L-arginine biosynthesis; N(2)-acetyl-L-ornithine from L-glutamate: step 2/4. In terms of biological role, catalyzes the ATP-dependent phosphorylation of N-acetyl-L-glutamate. This chain is Acetylglutamate kinase, found in Parasynechococcus marenigrum (strain WH8102).